Consider the following 348-residue polypeptide: MQTPSMAASTTSYYPIPKSFLLSPPRHKRNPNLISCSTKPICSPPPPSSSSSSPLQTTTTHRSQKQNLRLPTFEDSFLLYQFSSPTEDPGFSNRIPEQFDGEPRELVLPRVEDNNKGLAISSNMWWADLKAALGQRINIEGIVSSVSVVVKDRQFVLPHVSVKDLRYIDWEVLKRKGFKGVVFDKDNTLTAPYSLAIWPPLRPSIERCKAVFGHDIAVFSNSAGLTEYDHDDSKAKALEAEIGIRVLRHRVKKPAGTAEEVEKHFGCTSSELIMVGDRPFTDIVYGNRNGFLTVLTEPLSRAEEPFIVRQVRRLELALLKRWLRKGLKPVDHSLVSDITQFVKVPSDL.

The N-terminal 58 residues, M1 to T58, are a transit peptide targeting the chloroplast and mitochondrion. Residues P17 to N67 are disordered. Polar residues predominate over residues L55–N67. A Phosphoryl acceptor motif is present at residues D184–T188.

Belongs to the HAD-like hydrolase superfamily. Mg(2+) is required as a cofactor. Mainly expressed in inflorescences (especially in pollen) and, to a lower extent, in leaves, stems and siliques, as well as, at low levels, in roots. Mostly expressed in hypocotyl, vasculatures, trichomes, guard cells and stigmas.

Its subcellular location is the plastid. The protein localises to the chloroplast. It localises to the mitochondrion. The catalysed reaction is a 1,2-diacyl-sn-glycero-3-phospho-(1'-sn-glycero-3'-phosphate) + H2O = a 1,2-diacyl-sn-glycero-3-phospho-(1'-sn-glycerol) + phosphate. It functions in the pathway phospholipid metabolism; phosphatidylglycerol biosynthesis; phosphatidylglycerol from CDP-diacylglycerol: step 2/2. Its function is as follows. Phosphatidylglycerophosphate (PGP) phosphatase involved in the biosynthesis of phosphatidylglycerol (PG), a phosphoglycerolipid predominantly present in chloroplastic thylakoid membranes and which has important photosynthetic function; seems to use PGP 34:3, PGP 34:2 and PGP 34:1 as substrates. Required for thylakoid membranes development and chloroplast function. Necessary for normal cell growth. Required for root growth and columella cells organization. This chain is Phosphatidylglycerophosphate phosphatase 1, chloroplastic/mitochondrial, found in Arabidopsis thaliana (Mouse-ear cress).